A 500-amino-acid chain; its full sequence is MTLVDTRTPDPKRLIPGATGDWEIVIGMEVHAQVLSQSKLFSGASTTFGNAPNDNVSLVDAAMPGMLPVINEECVRQAVRTGLGLKAKINKRSIFDRKNYFYPDLPQGYQISQFKDPIVGEGKIIISLGPDRQGNFEDIEIGIERLHLEQDAGKSMHDQHPTMSYVDLNRSGVALMEIVSKPDMRSSDEAKAYMTKLRSIVRYLGTCDGNMDEGSMRADVNVSVRKPGGEFGTRCEIKNVNSIRFIGQAIEYEARRQIAILEDGGSIDQETRLFDPGKGETRSMRSKEDAHDYRYFPDPDLLPLEFDDAFVQALKKDLPELPDDKKARFVASLGLSVYDASVLVSEKAIADYYEAVAAGRDGKIAANWVINDLLGALNKAGKGIEETPVSPAQLGGIIDLIKAETISGKIAKDLFEIVFNEGGDPADIVESRGMKQVTDTGAIEKAVDEIIAANPDQVAKVLAKPTLAGWFVGQVMKATGGKANPQAVQALVKAKLGLEE.

Belongs to the GatB/GatE family. GatB subfamily. In terms of assembly, heterotrimer of A, B and C subunits.

The catalysed reaction is L-glutamyl-tRNA(Gln) + L-glutamine + ATP + H2O = L-glutaminyl-tRNA(Gln) + L-glutamate + ADP + phosphate + H(+). It catalyses the reaction L-aspartyl-tRNA(Asn) + L-glutamine + ATP + H2O = L-asparaginyl-tRNA(Asn) + L-glutamate + ADP + phosphate + 2 H(+). In terms of biological role, allows the formation of correctly charged Asn-tRNA(Asn) or Gln-tRNA(Gln) through the transamidation of misacylated Asp-tRNA(Asn) or Glu-tRNA(Gln) in organisms which lack either or both of asparaginyl-tRNA or glutaminyl-tRNA synthetases. The reaction takes place in the presence of glutamine and ATP through an activated phospho-Asp-tRNA(Asn) or phospho-Glu-tRNA(Gln). This Allorhizobium ampelinum (strain ATCC BAA-846 / DSM 112012 / S4) (Agrobacterium vitis (strain S4)) protein is Aspartyl/glutamyl-tRNA(Asn/Gln) amidotransferase subunit B.